The chain runs to 689 residues: Beta-galactosidase BbgII (689 aa).

Arg122 and Asn160 together coordinate substrate. The active-site Proton donor is Glu161. Catalysis depends on Glu320, which acts as the Nucleophile. Substrate is bound by residues Trp328 and 368–371 (EKWH).

The protein belongs to the glycosyl hydrolase 42 family.

It carries out the reaction Hydrolysis of terminal non-reducing beta-D-galactose residues in beta-D-galactosides.. This chain is Beta-galactosidase BbgII, found in Bifidobacterium bifidum (strain DSM 20082 / JCM 1254 / BCRC 11844 / KCTC 3440 / E319f (Variant a)).